The chain runs to 163 residues: Transmembrane protein 278 (163 aa).

A disordered region spans residues 1–37 (MSEQGRETEEEEGGGGASDTAPMLPRGPPDHQASALT). The next 2 helical transmembrane spans lie at 51–71 (LLAGLLLHLLLPAAAFLLVLL) and 105–125 (AALIVFGLLSLPPLLVLASAV). Positions 136–148 (LLPPPAGTPGPRR) are enriched in pro residues. The segment at 136–156 (LLPPPAGTPGPRRPPGRPDED) is disordered.

Belongs to the TMEM88 family.

The protein localises to the membrane. The protein is Transmembrane protein 278 of Homo sapiens (Human).